A 240-amino-acid polypeptide reads, in one-letter code: Uridylate kinase (240 aa).

ATP is bound at residue 12 to 15; sequence KLSG. Residues 20–25 form an involved in allosteric activation by GTP region; sequence GEQGFG. UMP is bound at residue Gly54. Residues Gly55 and Arg59 each coordinate ATP. Residues Asp74 and 135–142 contribute to the UMP site; that span reads TGNPYFST. The ATP site is built by Asn163, Tyr169, and Asp172.

It belongs to the UMP kinase family. As to quaternary structure, homohexamer.

It localises to the cytoplasm. The catalysed reaction is UMP + ATP = UDP + ADP. It participates in pyrimidine metabolism; CTP biosynthesis via de novo pathway; UDP from UMP (UMPK route): step 1/1. With respect to regulation, allosterically activated by GTP. Inhibited by UTP. Catalyzes the reversible phosphorylation of UMP to UDP. The sequence is that of Uridylate kinase from Bacillus anthracis.